A 356-amino-acid polypeptide reads, in one-letter code: Replication factor C subunit 3 (356 aa).

Lys20 is subject to N6-acetyllysine. Phosphoserine is present on Ser125.

This sequence belongs to the activator 1 small subunits family. As to quaternary structure, subunit of the RFC complex, an heteropentameric complex consisting of a large subunit RFC1 and four small subunits RFC2, RFC3, RFC4 and RFC5; the RFC complex interacts with PCNA. Forms an heterotetrameric complex with RFC2, RFC4 and RFC5; this complex has ATPase activity but is not stimulated by PCNA. The heterotetramer of subunits RFC2, RFC3, RFC4 and RFC5 interacts with RAD17. Interacts with CNTD1; this interaction facilitates crossover formation.

Its subcellular location is the nucleus. In terms of biological role, subunit of the replication factor C (RFC) complex which acts during elongation of primed DNA templates by DNA polymerases delta and epsilon, and is necessary for ATP-dependent loading of proliferating cell nuclear antigen (PCNA) onto primed DNA. This Bos taurus (Bovine) protein is Replication factor C subunit 3 (RFC3).